The chain runs to 122 residues: Large ribosomal subunit protein uL14 (122 aa).

This sequence belongs to the universal ribosomal protein uL14 family. Part of the 50S ribosomal subunit. Forms a cluster with proteins L3 and L19. In the 70S ribosome, L14 and L19 interact and together make contacts with the 16S rRNA in bridges B5 and B8.

In terms of biological role, binds to 23S rRNA. Forms part of two intersubunit bridges in the 70S ribosome. The protein is Large ribosomal subunit protein uL14 of Spiroplasma citri.